A 230-amino-acid chain; its full sequence is Ribonuclease HII (230 aa).

Positions 1–224 constitute an RNase H type-2 domain; the sequence is MIIIGIDEAG…CKRILDKSKQ (224 aa). Positions 7, 8, and 112 each coordinate a divalent metal cation.

It belongs to the RNase HII family. The cofactor is Mn(2+). Mg(2+) is required as a cofactor.

It localises to the cytoplasm. It carries out the reaction Endonucleolytic cleavage to 5'-phosphomonoester.. Its function is as follows. Endonuclease that specifically degrades the RNA of RNA-DNA hybrids. The protein is Ribonuclease HII (rnhB) of Methanocaldococcus jannaschii (strain ATCC 43067 / DSM 2661 / JAL-1 / JCM 10045 / NBRC 100440) (Methanococcus jannaschii).